Consider the following 171-residue polypeptide: MSHKKSGTYWATLITAFLKTVSKVEELDCVDSAVLVDVSKIITLTQEFRRHYDSVYRADYGPALKNWKRDLSKLFTSLFVDVINSGRIVGFFDVGRYVCEEVLCPGSWTEDHELLNDCMTHFFIENNLMNHFPLEDIFLAQRKFQTTGFTFLLHALAKVLPRIYSGNVIYV.

In terms of assembly, interacts with host BECN1; this interaction inhibits host autophagy. Interacts with host BAK1 and BAX.

The protein localises to the host cytoplasm. Its function is as follows. Plays a role in the protection against apoptosis mediated by cytotoxic cells during the immune response to acute and persistent viral infection. Contributes therefore to latency establishment. Plays also a role in the inhibition of host starvation-induced autophagy which ultimately contributes to the viral chronic infection. This Murid herpesvirus 4 (MuHV-4) protein is Apoptosis regulator Bcl-2 homolog (vBCL2).